A 212-amino-acid chain; its full sequence is Methylthioribulose-1-phosphate dehydratase (212 aa).

The Zn(2+) site is built by His-97 and His-99.

The protein belongs to the aldolase class II family. MtnB subfamily. Homotetramer. Zn(2+) serves as cofactor.

It carries out the reaction 5-(methylsulfanyl)-D-ribulose 1-phosphate = 5-methylsulfanyl-2,3-dioxopentyl phosphate + H2O. Its pathway is amino-acid biosynthesis; L-methionine biosynthesis via salvage pathway; L-methionine from S-methyl-5-thio-alpha-D-ribose 1-phosphate: step 2/6. In terms of biological role, catalyzes the dehydration of methylthioribulose-1-phosphate (MTRu-1-P) into 2,3-diketo-5-methylthiopentyl-1-phosphate (DK-MTP-1-P). The polypeptide is Methylthioribulose-1-phosphate dehydratase (Bacillus cereus (strain ATCC 10987 / NRS 248)).